A 380-amino-acid polypeptide reads, in one-letter code: Lipid-A-disaccharide synthase (380 aa).

It belongs to the LpxB family.

It catalyses the reaction a lipid X + a UDP-2-N,3-O-bis[(3R)-3-hydroxyacyl]-alpha-D-glucosamine = a lipid A disaccharide + UDP + H(+). Its pathway is bacterial outer membrane biogenesis; LPS lipid A biosynthesis. In terms of biological role, condensation of UDP-2,3-diacylglucosamine and 2,3-diacylglucosamine-1-phosphate to form lipid A disaccharide, a precursor of lipid A, a phosphorylated glycolipid that anchors the lipopolysaccharide to the outer membrane of the cell. This Francisella tularensis subsp. tularensis (strain FSC 198) protein is Lipid-A-disaccharide synthase.